We begin with the raw amino-acid sequence, 187 residues long: Rusticyanin (187 aa).

The signal sequence occupies residues 1-32 (MYTQNTMKKNWYVTVGAAAALAATVGMGTAMA). Residues 85-187 (SFEVHDKKNP…TGMFGKIIVK (103 aa)) enclose the Plastocyanin-like domain. Histidine 117, cysteine 170, histidine 175, and methionine 180 together coordinate Cu cation.

As to quaternary structure, monomer. Requires Cu cation as cofactor.

It localises to the periplasm. Electron carrier from cytochrome c552 to the A-type oxidase. The sequence is that of Rusticyanin (rus) from Acidithiobacillus ferridurans.